We begin with the raw amino-acid sequence, 438 residues long: uncharacterized protein (438 aa).

The residue at position 273 (lysine 273) is an N6-(pyridoxal phosphate)lysine.

It belongs to the class-III pyridoxal-phosphate-dependent aminotransferase family. It depends on pyridoxal 5'-phosphate as a cofactor.

The protein localises to the mitochondrion. This is an uncharacterized protein from Schizosaccharomyces pombe (strain 972 / ATCC 24843) (Fission yeast).